Consider the following 350-residue polypeptide: Small ribosomal subunit biogenesis GTPase RsgA (350 aa).

Residues 1–17 show a composition bias toward polar residues; that stretch reads MSKNKLSKGQQRRVNAN. The disordered stretch occupies residues 1–27; the sequence is MSKNKLSKGQQRRVNANHQRRLKTSAE. A CP-type G domain is found at 104–273; it reads TSVLTRPDFY…VIDSPGVREF (170 aa). GTP contacts are provided by residues 160 to 163 and 214 to 222; these read NKID and GQSGVGKSS. Positions 297, 302, 304, and 310 each coordinate Zn(2+).

The protein belongs to the TRAFAC class YlqF/YawG GTPase family. RsgA subfamily. Monomer. Associates with 30S ribosomal subunit, binds 16S rRNA. The cofactor is Zn(2+).

Its subcellular location is the cytoplasm. Functionally, one of several proteins that assist in the late maturation steps of the functional core of the 30S ribosomal subunit. Helps release RbfA from mature subunits. May play a role in the assembly of ribosomal proteins into the subunit. Circularly permuted GTPase that catalyzes slow GTP hydrolysis, GTPase activity is stimulated by the 30S ribosomal subunit. In Salmonella typhi, this protein is Small ribosomal subunit biogenesis GTPase RsgA.